The sequence spans 82 residues: Myosin light chain alkali (82 aa).

The EF-hand domain maps to 7–42 (GCYGDFIECLKLYDKEENGTMMLAELQHALLALGES).

In terms of assembly, myosin is a hexamer of 2 heavy chains and 4 light chains.

This is Myosin light chain alkali (Mlc1) from Drosophila sechellia (Fruit fly).